The chain runs to 299 residues: Pyridoxal 5'-phosphate synthase subunit PdxS (299 aa).

Aspartate 29 contributes to the D-ribose 5-phosphate binding site. The Schiff-base intermediate with D-ribose 5-phosphate role is filled by lysine 86. Residue glycine 158 coordinates D-ribose 5-phosphate. Position 170 (arginine 170) interacts with D-glyceraldehyde 3-phosphate. D-ribose 5-phosphate-binding positions include glycine 219 and 240 to 241 (GS).

The protein belongs to the PdxS/SNZ family. As to quaternary structure, in the presence of PdxT, forms a dodecamer of heterodimers.

The catalysed reaction is aldehydo-D-ribose 5-phosphate + D-glyceraldehyde 3-phosphate + L-glutamine = pyridoxal 5'-phosphate + L-glutamate + phosphate + 3 H2O + H(+). It functions in the pathway cofactor biosynthesis; pyridoxal 5'-phosphate biosynthesis. Functionally, catalyzes the formation of pyridoxal 5'-phosphate from ribose 5-phosphate (RBP), glyceraldehyde 3-phosphate (G3P) and ammonia. The ammonia is provided by the PdxT subunit. Can also use ribulose 5-phosphate and dihydroxyacetone phosphate as substrates, resulting from enzyme-catalyzed isomerization of RBP and G3P, respectively. This Mycobacterium bovis (strain ATCC BAA-935 / AF2122/97) protein is Pyridoxal 5'-phosphate synthase subunit PdxS.